We begin with the raw amino-acid sequence, 230 residues long: Ribosomal RNA small subunit methyltransferase G (230 aa).

S-adenosyl-L-methionine-binding positions include Gly80, Phe85, Val131 to Glu132, and Arg145.

It belongs to the methyltransferase superfamily. RNA methyltransferase RsmG family.

The protein resides in the cytoplasm. It catalyses the reaction guanosine(527) in 16S rRNA + S-adenosyl-L-methionine = N(7)-methylguanosine(527) in 16S rRNA + S-adenosyl-L-homocysteine. Its function is as follows. Specifically methylates the N7 position of guanine in position 527 of 16S rRNA. This is Ribosomal RNA small subunit methyltransferase G from Novosphingobium aromaticivorans (strain ATCC 700278 / DSM 12444 / CCUG 56034 / CIP 105152 / NBRC 16084 / F199).